A 481-amino-acid polypeptide reads, in one-letter code: Hyaluronidase-4 (481 aa).

The Cytoplasmic segment spans residues 1–8 (MKVLSEGQ). The chain crosses the membrane as a helical span at residues 9-29 (LKLCVVQPVHLTSWLLIFFIL). At 30–453 (KSISCLKPAR…ADCREIKTAD (424 aa)) the chain is on the extracellular side. 5 disulfide bridges follow: Cys59/Cys351, Cys223/Cys237, Cys376/Cys387, Cys381/Cys435, and Cys437/Cys446. Residues Asn86 and Asn115 are each glycosylated (N-linked (GlcNAc...) asparagine). Catalysis depends on Glu147, which acts as the Proton donor. Residue Asn177 is glycosylated (N-linked (GlcNAc...) (complex) asparagine). The N-linked (GlcNAc...) asparagine glycan is linked to Asn343. Residues 454 to 474 (GCSGVSPSPGSLMTLCLLLLA) traverse the membrane as a helical segment. Residues 475-481 (SYRSIQL) are Cytoplasmic-facing.

This sequence belongs to the glycosyl hydrolase 56 family. In terms of tissue distribution, detected in placenta and skeletal muscle.

The protein localises to the membrane. It carries out the reaction Random hydrolysis of (1-&gt;4)-linkages between N-acetyl-beta-D-glucosamine and D-glucuronate residues in hyaluronate.. Functionally, endo-hyaluronidase that degrades hyaluronan to smaller oligosaccharide fragments. Also has chondroitin sulfate hydrolase activity, The best substrate being the galactosaminidic linkage in the sequence of a trisulfated tetrasaccharide. The sequence is that of Hyaluronidase-4 (HYAL4) from Homo sapiens (Human).